The primary structure comprises 520 residues: MEASLHFPIDASLRAAVAVISAGAFYLLNLVIYRLFLSPLAKFPGPKLAAVTSWYELYYDLVHKGKYLFEIEKMHDKYGPIVRINPFELSIRDSEYYDELYVAGSVRPTDRYEAFVEGIVDFKGSHIATIEHDLHRKRRKPLDPYFSRLGVSRLEPMLGELTEKLIVNRFESFKRTGKVVRLDHAFTAYSGDVINRLCMDDPPDVLVDDPEFSPWWYNMFHNGIATLPLFMGLPWLIHVVRLIPVSILAKLDPGTQTFNKFKMMCDDHLRVAKREKAAQGSKDTSMMDARPTIFRHLLNSDLPPSELTDDLLSKEAQVLIGTGTITTAGSLCFICYHIVVNPAIKKRLQEDLKLIMANYPAKKPTWAELETATYLQAVIKEGLRLSFGTMHRRTRVSPKQPLQFRQWTIPAGVPVGMSAYYAHRDPSVFPRPDEFLPERWLSNVTPEMSRNYVPFSRGSRRCLGMNLAYAEINHVIATLFRPGGPDFKLYETSEKDVKPAHDLIVPLPSLESKGFRVIFR.

The next 3 membrane-spanning stretches (helical) occupy residues 17–37, 229–249, and 320–340; these read VAVI…RLFL, LFMG…SILA, and IGTG…HIVV. Cys-462 contributes to the heme binding site.

This sequence belongs to the cytochrome P450 family. Requires heme as cofactor.

It is found in the membrane. The protein operates within secondary metabolite biosynthesis; terpenoid biosynthesis. Its function is as follows. Cytochrome P450 monooxygenase; part of the gene cluster that mediates the biosynthesis of the sesterterpenes ophiobolins, fungal phytotoxins with potential anti-cancer activities. The first step of the pathway is performed by the sesterterpene synthase oblA that possesses both prenyl transferase and terpene cyclase activity, converting isopentenyl diphosphate and dimethylallyl diphosphate into geranylfarnesyl diphosphate (GFPP) and further converting GFPP into ophiobolin F, respectively. Other sesterterpenoids (C(25) terpenoids) are found as minor products of oblA. It is expected that ophiobolin F is then oxidized to ophiobolin A via ophiobolin C and ophiobolin B intermediates by the combined action of the cytochrome P450 monooxygenase oblB and the FAD-dependent oxidoreductase oblC. Although oblB catalyzes multistep oxygenations at C5 and C21/C7 in a relatively efficient manner, it is unable to convert ophiobolin F to ophiobolin C and produces instead several unexpected derivatives. The chain is Cytochrome P450 monooxygenase oblB from Aspergillus clavatus (strain ATCC 1007 / CBS 513.65 / DSM 816 / NCTC 3887 / NRRL 1 / QM 1276 / 107).